Reading from the N-terminus, the 420-residue chain is MFKKSMNIADYDPVLWQAIENENRRQEEHIELIASENYASPRVMQAQGSQFTNKYAEGYPGKRYYGGCEYADIVEQLAIERAKELFGADYVNVQPHSGSQANAAVYMGLLNPGDTILGMSLAHGGHLTHGASVSFSGKIYHAEQYGITDEGLIDYDALRKQAHDVKPKMIVGGFSAYSQVVDWKKMREIADEVGAYLFVDMAHVAGLVAAGIYPNPLPYAHVVTTTTHKTLGGPRGGLILSSCGDEEIYKKLNSAVFPAGQGGPLVHIIAAKAVCFKEALEPEYKVYQQNVLKNAKAMVEVFKQRCYKVVSNGTENHLFLVDLVSHGLTGKAADAALGKANITVNKNSVPNDPQKPFITSGIRVGTPSVTRRGFNEADVKELAGWMCDVLDAIGKDNEAEVIADTKDKVLAICKRLPVYA.

(6S)-5,6,7,8-tetrahydrofolate contacts are provided by residues Leu121 and 125–127; that span reads GHL. Lys229 is subject to N6-(pyridoxal phosphate)lysine.

Belongs to the SHMT family. Homodimer. Pyridoxal 5'-phosphate serves as cofactor.

The protein resides in the cytoplasm. It carries out the reaction (6R)-5,10-methylene-5,6,7,8-tetrahydrofolate + glycine + H2O = (6S)-5,6,7,8-tetrahydrofolate + L-serine. It participates in one-carbon metabolism; tetrahydrofolate interconversion. Its pathway is amino-acid biosynthesis; glycine biosynthesis; glycine from L-serine: step 1/1. Its function is as follows. Catalyzes the reversible interconversion of serine and glycine with tetrahydrofolate (THF) serving as the one-carbon carrier. This reaction serves as the major source of one-carbon groups required for the biosynthesis of purines, thymidylate, methionine, and other important biomolecules. Also exhibits THF-independent aldolase activity toward beta-hydroxyamino acids, producing glycine and aldehydes, via a retro-aldol mechanism. The polypeptide is Serine hydroxymethyltransferase (Aggregatibacter actinomycetemcomitans (Actinobacillus actinomycetemcomitans)).